The following is a 156-amino-acid chain: uncharacterized protein (156 aa).

The N-acetyltransferase domain occupies 11–156; sequence EEFRSYLTYT…ETDVVMSKKL (146 aa).

This sequence belongs to the acetyltransferase family. As to quaternary structure, homodimer.

This is an uncharacterized protein from Bacillus subtilis (strain 168).